The sequence spans 531 residues: Serine protease gd (531 aa).

An N-terminal signal peptide occupies residues M1–A19. Residues P155–Q174 are disordered. The region spanning I246–I531 is the Peptidase S1 domain. N272 carries an N-linked (GlcNAc...) asparagine glycan. Residues C280 and C296 are joined by a disulfide bond. Residues H295 and D350 each act as charge relay system in the active site. N-linked (GlcNAc...) asparagine glycosylation is found at N397 and N445. C432 and C449 are oxidised to a cystine. Catalysis depends on S471, which acts as the Charge relay system.

It belongs to the peptidase S1 family. In terms of processing, proteolytically activated by the protease ndl. In terms of tissue distribution, expression begins in previtellogenic stages and is seen in germline-derived nurse cells of the germarium. Expression continues throughout oogenesis with transcripts from the nurse cells accumulating in the oocytes. Most abundant in the ovaries, the level of protein decreases from the moment of egg laying and is essentially gone by 4 hours.

Its subcellular location is the secreted. Its function is as follows. Component of the extracellular signaling pathway that establishes the dorsal-ventral pathway of the embryo. A protease cascade involving ndl, gd, snk and ea results in activation of the spz Toll receptor ligand; acts downstream of ndl but upstream of snk and ea. Activation of ea requires activation of the ndl-gd-snk protease cascade and sulfation of a vitelline membrane component by pip. Localized activation of the Toll receptor in the ventral region of the embryo defines cell identities along the dorsal-ventral continuum. The polypeptide is Serine protease gd (Drosophila melanogaster (Fruit fly)).